We begin with the raw amino-acid sequence, 273 residues long: Holocytochrome c-type synthase (273 aa).

The span at 1–18 (MGLSASSPAATAQSAAEP) shows a compositional bias: low complexity. The disordered stretch occupies residues 1–39 (MGLSASSPAATAQSAAEPSKQHQVASPPSECPMHQEKMR). HRM repeat units follow at residues 30–35 (ECPMHQ) and 40–45 (GCPMHM).

It belongs to the cytochrome c-type heme lyase family.

The protein resides in the mitochondrion inner membrane. It carries out the reaction holo-[cytochrome c] = apo-[cytochrome c] + heme b. Its function is as follows. Lyase that catalyzes the covalent linking of the heme group to the cytochrome C apoprotein to produce the mature functional cytochrome. In Gallus gallus (Chicken), this protein is Holocytochrome c-type synthase (HCCS).